We begin with the raw amino-acid sequence, 113 residues long: Large ribosomal subunit protein uL24 (113 aa).

The tract at residues 48 to 70 (HRKRVTNDKGTSSGGLEKRESPM) is disordered.

The protein belongs to the universal ribosomal protein uL24 family. As to quaternary structure, part of the 50S ribosomal subunit.

In terms of biological role, one of two assembly initiator proteins, it binds directly to the 5'-end of the 23S rRNA, where it nucleates assembly of the 50S subunit. One of the proteins that surrounds the polypeptide exit tunnel on the outside of the subunit. This chain is Large ribosomal subunit protein uL24, found in Tropheryma whipplei (strain TW08/27) (Whipple's bacillus).